The sequence spans 181 residues: Protein Syd (181 aa).

This sequence belongs to the Syd family.

It is found in the cell inner membrane. Interacts with the SecY protein in vivo. May bind preferentially to an uncomplexed state of SecY, thus functioning either as a chelating agent for excess SecY in the cell or as a regulatory factor that negatively controls the translocase function. The polypeptide is Protein Syd (Klebsiella pneumoniae subsp. pneumoniae (strain ATCC 700721 / MGH 78578)).